We begin with the raw amino-acid sequence, 361 residues long: Phospho-N-acetylmuramoyl-pentapeptide-transferase (361 aa).

Helical transmembrane passes span 25–45, 73–93, 98–118, 139–159, 168–188, 200–220, 237–257, 264–284, 290–310, and 339–359; these read RGIL…PAVI, TMGG…WGDL, VWLV…DDWI, IFGL…AAIT, IALP…IVGF, GLAI…AYAS, AGEL…FLWF, VFMG…IAVI, VLVI…IQVV, and VIVR…ATLK.

This sequence belongs to the glycosyltransferase 4 family. MraY subfamily. Requires Mg(2+) as cofactor.

The protein resides in the cell inner membrane. The catalysed reaction is UDP-N-acetyl-alpha-D-muramoyl-L-alanyl-gamma-D-glutamyl-meso-2,6-diaminopimeloyl-D-alanyl-D-alanine + di-trans,octa-cis-undecaprenyl phosphate = di-trans,octa-cis-undecaprenyl diphospho-N-acetyl-alpha-D-muramoyl-L-alanyl-D-glutamyl-meso-2,6-diaminopimeloyl-D-alanyl-D-alanine + UMP. Its pathway is cell wall biogenesis; peptidoglycan biosynthesis. Functionally, catalyzes the initial step of the lipid cycle reactions in the biosynthesis of the cell wall peptidoglycan: transfers peptidoglycan precursor phospho-MurNAc-pentapeptide from UDP-MurNAc-pentapeptide onto the lipid carrier undecaprenyl phosphate, yielding undecaprenyl-pyrophosphoryl-MurNAc-pentapeptide, known as lipid I. In Xanthomonas euvesicatoria pv. vesicatoria (strain 85-10) (Xanthomonas campestris pv. vesicatoria), this protein is Phospho-N-acetylmuramoyl-pentapeptide-transferase.